The primary structure comprises 610 residues: Sterol O-acyltransferase 1 (610 aa).

Phosphoserine is present on residues Ser-21 and Ser-45. Positions Ser-41 to Tyr-81 are disordered. Residues Glu-67–Glu-76 show a composition bias toward basic and acidic residues. 5 helical membrane-spanning segments follow: residues Leu-182–Ile-202, Leu-229–Val-249, Gly-264–Val-284, Ile-371–Tyr-391, and Ile-409–Met-429. The FYXDWWN motif motif lies at Phe-491 to Asn-497. A run of 2 helical transmembrane segments spans residues Ala-535–Phe-555 and Val-590–Leu-610. The active site involves His-547.

The protein belongs to the membrane-bound acyltransferase family. Sterol o-acyltransferase subfamily.

Its subcellular location is the endoplasmic reticulum membrane. The enzyme catalyses lanosterol + an acyl-CoA = lanosteryl ester + CoA. Sterol O-acyltransferase that catalyzes the formation of stery esters. This is Sterol O-acyltransferase 1 from Saccharomyces cerevisiae (strain ATCC 204508 / S288c) (Baker's yeast).